The primary structure comprises 480 residues: Phenylalanine--tRNA ligase alpha subunit (480 aa).

Positions 324 and 407 each coordinate L-phenylalanine. Glutamate 409 is a Mg(2+) binding site. Phenylalanine 432 serves as a coordination point for L-phenylalanine.

The protein belongs to the class-II aminoacyl-tRNA synthetase family. Phe-tRNA synthetase alpha subunit type 2 subfamily. In terms of assembly, tetramer of two alpha and two beta subunits. Mg(2+) is required as a cofactor.

It localises to the cytoplasm. The enzyme catalyses tRNA(Phe) + L-phenylalanine + ATP = L-phenylalanyl-tRNA(Phe) + AMP + diphosphate + H(+). This chain is Phenylalanine--tRNA ligase alpha subunit, found in Methanocaldococcus jannaschii (strain ATCC 43067 / DSM 2661 / JAL-1 / JCM 10045 / NBRC 100440) (Methanococcus jannaschii).